Here is a 317-residue protein sequence, read N- to C-terminus: Ubiquinone biosynthesis protein COQ9, mitochondrial (317 aa).

A mitochondrion-targeting transit peptide spans 1-46 (MAASVARVLKAAGGRQLLLMVARRRPVLRQPFLLMPRKFWGTSALR). Residues 45-97 (LRSEDQKQPPFSSTSAHAGTPEHAEEQYQQQQPPPRYTDQAGEESEGYESEEQ) are disordered. Over residues 85–96 (AGEESEGYESEE) the composition is skewed to acidic residues. Arginine 243 contacts a 1,2-diacylglycero-3-phosphoethanolamine.

This sequence belongs to the COQ9 family. In terms of assembly, homodimer. Heterodimer; two heterodimers of COQ7:COQ9 come together on the same side of the lipid pseudo-bilayer and form a curved tetramer with a hydrophobic surface suitable for membrane interaction. These two tetramers assemble into a soluble octamer with a pseudo-bilayer of lipids captured within. Interacts with COQ7; this interaction allows ubiquinone (CoQ) isoprene intermediates presentation to COQ7 and facilitates the COQ7-mediated hydroxylase step.

The protein localises to the mitochondrion. It participates in cofactor biosynthesis; ubiquinone biosynthesis. Membrane-associated protein that warps the membrane surface to access and bind aromatic isoprenes with high specificity, including ubiquinone (CoQ) isoprene intermediates and presents them directly to COQ7, therefore facilitating the COQ7-mediated hydroxylase step. Participates in the biosynthesis of coenzyme Q, also named ubiquinone, an essential lipid-soluble electron transporter for aerobic cellular respiration. In Xenopus tropicalis (Western clawed frog), this protein is Ubiquinone biosynthesis protein COQ9, mitochondrial.